Here is a 313-residue protein sequence, read N- to C-terminus: Dihydroorotate dehydrogenase (fumarate) (313 aa).

FMN is bound by residues Ala-20 and 44 to 45 (KS). Substrate-binding positions include Lys-44, 68–72 (NSMGL), and Asn-128. Asn-128 serves as a coordination point for FMN. The active-site Nucleophile is the Cys-131. Residue Asn-133 coordinates substrate. FMN contacts are provided by Lys-165 and Val-194. A substrate-binding site is contributed by 195-196 (NS). FMN-binding positions include Gly-223, Cys-249, 249 to 251 (CGG), and 272 to 273 (GT).

The protein belongs to the dihydroorotate dehydrogenase family. Type 1 subfamily. In terms of assembly, homodimer. The cofactor is FMN.

It is found in the cytoplasm. The catalysed reaction is (S)-dihydroorotate + fumarate = orotate + succinate. It participates in pyrimidine metabolism; UMP biosynthesis via de novo pathway. Its function is as follows. Catalyzes the conversion of dihydroorotate to orotate with fumarate as the electron acceptor. Molecular oxygen can replace fumarate in vitro. The protein is Dihydroorotate dehydrogenase (fumarate) of Trypanosoma brucei brucei (strain 927/4 GUTat10.1).